The chain runs to 288 residues: Energy-coupling factor transporter ATP-binding protein EcfA2 (288 aa).

Positions 3–246 constitute an ABC transporter domain; it reads IKLEQLGYCY…PDELVDLGLS (244 aa). 40 to 47 contacts ATP; that stretch reads GHTGSGKS.

Belongs to the ABC transporter superfamily. Energy-coupling factor EcfA family. Forms a stable energy-coupling factor (ECF) transporter complex composed of 2 membrane-embedded substrate-binding proteins (S component), 2 ATP-binding proteins (A component) and 2 transmembrane proteins (T component).

Its subcellular location is the cell membrane. ATP-binding (A) component of a common energy-coupling factor (ECF) ABC-transporter complex. Unlike classic ABC transporters this ECF transporter provides the energy necessary to transport a number of different substrates. This chain is Energy-coupling factor transporter ATP-binding protein EcfA2, found in Listeria monocytogenes serovar 1/2a (strain ATCC BAA-679 / EGD-e).